A 241-amino-acid polypeptide reads, in one-letter code: Cysteine-rich secretory protein 3 (241 aa).

Positions 1 to 19 (MALMLVLFFLAAVLPPSLL) are cleaved as a signal peptide. The SCP domain maps to 44 to 170 (SKHNQLRRKV…PLRYFYVCRY (127 aa)). N-linked (GlcNAc...) asparagine glycosylation is found at Asn118, Asn132, and Asn175. Cystine bridges form between Cys194/Cys201, Cys197/Cys206, Cys210/Cys241, Cys219/Cys235, and Cys226/Cys239. The ShKT domain occupies 210–241 (CQYKDMSFWCKRLEYVCKHPGLKKRCLATCQC).

This sequence belongs to the CRISP family. In terms of assembly, interacts with A1BG. Interacts with KNG1 isoform LMW. In terms of tissue distribution, expressed in submandibular gland.

The protein localises to the cytoplasmic vesicle. Its subcellular location is the secretory vesicle. In terms of biological role, this protein is supposed to help spermatozoa undergo functional maturation while they move from the testis to the ductus deferens. The chain is Cysteine-rich secretory protein 3 (Crisp3) from Mus musculus (Mouse).